An 827-amino-acid polypeptide reads, in one-letter code: DNA ligase (827 aa).

NAD(+) is bound by residues 45-49 (DAAYD), 94-95 (SL), and glutamate 128. Lysine 130 (N6-AMP-lysine intermediate) is an active-site residue. Arginine 151, glutamate 188, lysine 304, and lysine 328 together coordinate NAD(+). The Zn(2+) site is built by cysteine 451, cysteine 454, cysteine 475, and cysteine 481. The 80-residue stretch at 748-827 (AAAAAFSGRT…AEWLAMVEAA (80 aa)) folds into the BRCT domain.

The protein belongs to the NAD-dependent DNA ligase family. LigA subfamily. Mg(2+) is required as a cofactor. The cofactor is Mn(2+).

The enzyme catalyses NAD(+) + (deoxyribonucleotide)n-3'-hydroxyl + 5'-phospho-(deoxyribonucleotide)m = (deoxyribonucleotide)n+m + AMP + beta-nicotinamide D-nucleotide.. In terms of biological role, DNA ligase that catalyzes the formation of phosphodiester linkages between 5'-phosphoryl and 3'-hydroxyl groups in double-stranded DNA using NAD as a coenzyme and as the energy source for the reaction. It is essential for DNA replication and repair of damaged DNA. The sequence is that of DNA ligase from Methylobacterium sp. (strain 4-46).